Consider the following 75-residue polypeptide: Large ribosomal subunit protein bL31 (75 aa).

The protein belongs to the bacterial ribosomal protein bL31 family. Type A subfamily. Part of the 50S ribosomal subunit.

Functionally, binds the 23S rRNA. The sequence is that of Large ribosomal subunit protein bL31 from Sphingopyxis alaskensis (strain DSM 13593 / LMG 18877 / RB2256) (Sphingomonas alaskensis).